Reading from the N-terminus, the 677-residue chain is Sulfate transporter 2.2 (677 aa).

Residues 1-110 (MQLSSLSHTS…QYKLNLFKKD (110 aa)) lie on the Cytoplasmic side of the membrane. A helical membrane pass occupies residues 111–131 (LMAGLTLASLCIPQSIGYANL). Residues 132-133 (AG) are Extracellular-facing. A helical transmembrane segment spans residues 134–154 (LDPEYGLYTSVVPPLIYSTMG). Residues 155–158 (TSRE) lie on the Cytoplasmic side of the membrane. Residues 159 to 179 (LAIGPVAVVSLLLSSMVRDLQ) form a helical membrane-spanning segment. At 180–190 (DPVTDPIAYRK) the chain is on the extracellular side. A helical membrane pass occupies residues 191–211 (IVFTVTFFAGAFQAIFGLFRL). Residues 212-213 (GF) are Cytoplasmic-facing. Residues 214–234 (LVDFLSHAALVGFMAGAAIVI) form a helical membrane-spanning segment. Topologically, residues 235–270 (GLQQLKGLFGLTHFTNKTDVVSVLSSVFHSLHHPWQ) are extracellular. Asn250 carries N-linked (GlcNAc...) asparagine glycosylation. The chain crosses the membrane as a helical span at residues 271 to 291 (PLNFVIGSSFLIFILLARFIG). Topologically, residues 292–296 (KRNNK) are cytoplasmic. The helical transmembrane segment at 297–317 (LFWIPAMAPLISVVLATLIVY) threads the bilayer. Residues 318–352 (LSNAESRGVKIVKHIKPGFNQLSVNQLQFKSPHLG) lie on the Extracellular side of the membrane. The chain crosses the membrane as a helical span at residues 353 to 373 (QIAKIGLISAIIALTEAIAVG). At 374–389 (RSFATIKGYRLDGNKE) the chain is on the cytoplasmic side. A helical membrane pass occupies residues 390 to 410 (MMAMGFMNIAGSLSSCYVATG). Over 411-422 (SFSRTAVNFSAG) the chain is Extracellular. Asn418 carries an N-linked (GlcNAc...) asparagine glycan. A helical membrane pass occupies residues 423–443 (CETVVSNIVMAITVMISLEVL). Residues 444–446 (TRF) are Cytoplasmic-facing. The helical transmembrane segment at 447 to 467 (LYFTPTAILASIILSALPGLI) threads the bilayer. The Extracellular segment spans residues 468-482 (DVSGALHIWKLDKLD). A helical membrane pass occupies residues 483 to 503 (FLVLIAAFFGVLFASVEIGLL). Residues 504-677 (LAVGISFARI…RARSTSHELC (174 aa)) lie on the Cytoplasmic side of the membrane. The STAS domain occupies 540 to 666 (YPMANKTAGL…MTVGEAVDIY (127 aa)).

This sequence belongs to the SLC26A/SulP transporter (TC 2.A.53) family. As to expression, expressed in the phloem in roots and in the phloem of vascular bundles in leaves.

Its subcellular location is the membrane. Low-affinity H(+)/sulfate cotransporter that may be involved in the distribution of sulfate from vascular bundles to the palisade cells of the leaves. Plays a central role in the regulation of sulfate assimilation. The sequence is that of Sulfate transporter 2.2 (SULTR2;2) from Arabidopsis thaliana (Mouse-ear cress).